A 409-amino-acid polypeptide reads, in one-letter code: Elongation factor Tu (409 aa).

Residues 10-214 (KPHVNVGTIG…AVDSYIPTPE (205 aa)) enclose the tr-type G domain. The interval 19-26 (GHVDHGKT) is G1. 19–26 (GHVDHGKT) contributes to the GTP binding site. T26 is a Mg(2+) binding site. Residues 60-64 (GITIN) form a G2 region. A G3 region spans residues 81-84 (DCPG). Residues 81 to 85 (DCPGH) and 136 to 139 (NKVD) each bind GTP. A G4 region spans residues 136 to 139 (NKVD). The segment at 174-176 (SAL) is G5.

This sequence belongs to the TRAFAC class translation factor GTPase superfamily. Classic translation factor GTPase family. EF-Tu/EF-1A subfamily. As to quaternary structure, monomer.

It localises to the cytoplasm. It catalyses the reaction GTP + H2O = GDP + phosphate + H(+). Its function is as follows. GTP hydrolase that promotes the GTP-dependent binding of aminoacyl-tRNA to the A-site of ribosomes during protein biosynthesis. The chain is Elongation factor Tu from Synechococcus sp. (strain JA-3-3Ab) (Cyanobacteria bacterium Yellowstone A-Prime).